The primary structure comprises 438 residues: Indole diterpene prenyltransferase janD (438 aa).

80-81 (FM) lines the L-tryptophan pocket. Substrate-binding residues include arginine 102, lysine 190, arginine 264, lysine 266, tyrosine 268, tyrosine 350, tyrosine 414, and tyrosine 418.

Belongs to the tryptophan dimethylallyltransferase family.

Its pathway is secondary metabolite biosynthesis. In terms of biological role, indole diterpene prenyltransferase; part of the gene cluster that mediates the biosynthesis of the indole diterpenes janthitremanes such as shearinine K or shearinine A. The geranylgeranyl diphosphate (GGPP) synthase janG catalyzes the first step in janthitremane biosynthesis via conversion of farnesyl pyrophosphate and isopentyl pyrophosphate into geranylgeranyl pyrophosphate (GGPP). Condensation of indole-3-glycerol phosphate with GGPP by the prenyl transferase janC then forms 3-geranylgeranylindole (3-GGI). Epoxidation by the FAD-dependent monooxygenase janM leads to a epoxidized-GGI that is substrate of the terpene cyclase janB for cyclization to yield paspaline. Paspaline is subsequently converted to 13-desoxypaspaline by the cytochrome P450 monooxygenase janP, via beta-PC-M6 in a series of alpha-face oxidations. The cytochrome P450 monooxygenase janQ is proposed to carry out sequential beta-face oxidation steps at C-7 and C-13 of 13-desoxypaspaline to form paspalicine and paspalinine respectively. The indole diterpene prenyltransferase janD may then convert paspalinine into shearinine K which is substrate of janO and/or additional enzymes for oxidation and cyclization to generate shearinine A. In Penicillium janthinellum (Penicillium vitale), this protein is Indole diterpene prenyltransferase janD.